Here is an 893-residue protein sequence, read N- to C-terminus: Dolichyl-phosphate-mannose--protein mannosyltransferase 1 (893 aa).

7 helical membrane passes run 29–49 (FSFLDYVVVIFLTVVAFCVRA), 77–97 (LLMDVYPPLGKLLFSLVAALT), 124–144 (LFTCLLGSLLVPLMYGTVYFP), 147–167 (SKTAASLAALFVIFDNGLITM), 170–190 (YIMIEIPALYFMSLTAFYWSV), 224–244 (AMFTFGWLLILAAFHLWNLLG), and 258–278 (FSYIFYLIGVPITVYLAVFAV). Residues 310–364 (FADVAYGSLVTIRNAIPEHGYLHSSELLYPEGTEQQIISLVDEPNQNALWIIEHE) enclose the MIR 1 domain. N-linked (GlcNAc...) asparagine glycosylation occurs at Asn370. MIR domains follow at residues 374–433 (IELL…IQIL) and 443–499 (NGTV…IESN). Asn443 carries N-linked (GlcNAc...) asparagine glycosylation. Thr451 carries the post-translational modification Phosphothreonine. 3 consecutive transmembrane segments (helical) span residues 573-593 (FVWYSVISLVAFFVIVQIFCL), 610-630 (YNYNIGKFVVAWLLHWAPYIL), and 643-663 (ALYFGIAALGVSWSFLGNAVF). Asn665 carries N-linked (GlcNAc...) asparagine glycosylation. The helical transmembrane segment at 671 to 691 (ALSVIIMALMFLVYRLYSPFT) threads the bilayer. The N-linked (GlcNAc...) asparagine glycan is linked to Asn720. Positions 785 to 893 (KAEQEAREAA…VAESAQARVE (109 aa)) are disordered. Positions 786-806 (AEQEAREAAEKAASEAAERSS) are enriched in basic and acidic residues. 2 stretches are compositionally biased toward low complexity: residues 807-823 (SEAAASSSSESVAAASV) and 854-864 (MEAAALNNAAE). A compositionally biased stretch (polar residues) spans 868–878 (VVGSSPESVAS).

This sequence belongs to the glycosyltransferase 39 family.

It localises to the endoplasmic reticulum membrane. The protein resides in the nucleus membrane. It carries out the reaction a di-trans,poly-cis-dolichyl beta-D-mannosyl phosphate + L-seryl-[protein] = 3-O-(alpha-D-mannosyl)-L-seryl-[protein] + a di-trans,poly-cis-dolichyl phosphate + H(+). The catalysed reaction is a di-trans,poly-cis-dolichyl beta-D-mannosyl phosphate + L-threonyl-[protein] = 3-O-(alpha-D-mannosyl)-L-threonyl-[protein] + a di-trans,poly-cis-dolichyl phosphate + H(+). Its pathway is protein modification; protein glycosylation. Transfers mannose from Dol-P-mannose to Ser or Thr residues on proteins. Required for normal cell growth and septum formation. Shown to actively O-mannosylate wsc1. The chain is Dolichyl-phosphate-mannose--protein mannosyltransferase 1 (ogm1) from Schizosaccharomyces pombe (strain 972 / ATCC 24843) (Fission yeast).